The following is a 167-amino-acid chain: Epithelial membrane protein 2 (167 aa).

The helical transmembrane segment at 1 to 21 (MLVLLAFIIAFHITSAALLFI) threads the bilayer. Residues N44, N47, and N52 are each glycosylated (N-linked (GlcNAc...) asparagine). A run of 3 helical transmembrane segments spans residues 67–87 (TMILSTILCCIAFFIFVLQLF), 95–115 (FVLTSIIQLMSCLCVMIAASI), and 143–163 (YILAWVAFACTFISGMMYLIL).

It belongs to the PMP-22/EMP/MP20 family. As to quaternary structure, interacts with PTK2; regulates PTK2 activation and localization. Interacts with ITGB3; regulates the levels of the heterodimer ITGA5-ITGB3 integrin surface expression. Interacts with P2RX7 (via C-terminus). Interacts with ITGB1; the interaction may be direct or indirect and ITGB1 has a heterodimer form. Expressed in ciliary body epithelia, sclera, cornea, and retinal pigment epithelium (at protein level). Expressed in lung and endometrial tissue; expression is particularly abundant in secretory endometrium (at protein level). Expressed in placental villous syncytiotrophoblasts and cytotrophoblasts and on the membrane of interstitial trophoblasts (at protein level).

The protein resides in the golgi apparatus membrane. The protein localises to the cell membrane. It is found in the apical cell membrane. Its subcellular location is the membrane raft. It localises to the cytoplasm. The protein resides in the nucleus. The protein localises to the perinuclear region. Functions as a key regulator of cell membrane composition by regulating protein surface expression. Also, plays a role in regulation of processes including cell migration, cell proliferation, cell contraction and cell adhesion. Regulates transepithelial migration of neutrophils into the alveolar lumen, potentially via mediation of cell surface expression of adhesion markers and lipid raft formation. Negatively regulates caveolae formation by reducing CAV1 expression and CAV1 amount by increasing lysosomal degradation. Facilitates surface trafficking and formation of lipid rafts bearing GPI-anchor proteins. Regulates surface expression of MHC1 and ICAM1 proteins increasing susceptibility to T-cell mediated cytotoxicity. Regulates the plasma membrane expression of the integrin heterodimers ITGA6-ITGB1, ITGA5-ITGB3 and ITGA5-ITGB1 resulting in modulation of cell-matrix adhesion. Also regulates many processes through PTK2. Regulates blood vessel endothelial cell migration and angiogenesis by regulating VEGF protein expression through PTK2 activation. Regulates cell migration and cell contraction through PTK2 and SRC activation. Regulates focal adhesion density, F-actin conformation and cell adhesion capacity through interaction with PTK2. Positively regulates cell proliferation. Plays a role during cell death and cell blebbing. Promotes angiogenesis and vasculogenesis through induction of VEGFA via a HIF1A-dependent pathway. Also plays a role in embryo implantation by regulating surface trafficking of integrin heterodimer ITGA5-ITGB3. Plays a role in placental angiogenesis and uterine natural killer cell regulation at the maternal-fetal placental interface, however not required in the maternal tissues for a viable pregnancy. Involved in the early stages of embryogenic development and cardiogenesis, potentially via regulation of epithelial-mesenchymal transition timing. May play a role in glomerular filtration. In Homo sapiens (Human), this protein is Epithelial membrane protein 2 (EMP2).